Reading from the N-terminus, the 644-residue chain is Acetyl-coenzyme A synthetase (644 aa).

CoA is bound by residues 190-193 and Thr-308; that span reads RGSK. ATP-binding positions include 384–386, 408–413, Asp-497, and Arg-512; these read GEP and DTWWQT. Ser-520 lines the CoA pocket. ATP is bound at residue Arg-523. Positions 534, 536, and 539 each coordinate Mg(2+). Arg-581 lines the CoA pocket. Position 606 is an N6-acetyllysine (Lys-606).

This sequence belongs to the ATP-dependent AMP-binding enzyme family. It depends on Mg(2+) as a cofactor. Acetylated. Deacetylation by the SIR2-homolog deacetylase activates the enzyme.

The enzyme catalyses acetate + ATP + CoA = acetyl-CoA + AMP + diphosphate. Its function is as follows. Catalyzes the conversion of acetate into acetyl-CoA (AcCoA), an essential intermediate at the junction of anabolic and catabolic pathways. AcsA undergoes a two-step reaction. In the first half reaction, AcsA combines acetate with ATP to form acetyl-adenylate (AcAMP) intermediate. In the second half reaction, it can then transfer the acetyl group from AcAMP to the sulfhydryl group of CoA, forming the product AcCoA. The chain is Acetyl-coenzyme A synthetase from Magnetococcus marinus (strain ATCC BAA-1437 / JCM 17883 / MC-1).